Reading from the N-terminus, the 970-residue chain is Bifunctional glutamine synthetase adenylyltransferase/adenylyl-removing enzyme (970 aa).

Residues 1–454 form an adenylyl removase region; the sequence is MNSLPPRPSL…HFQQVFAAPQ (454 aa). An adenylyl transferase region spans residues 468 to 970; the sequence is QAVLASIWAG…WRRVMEEGKA (503 aa).

It belongs to the GlnE family. The cofactor is Mg(2+).

The enzyme catalyses [glutamine synthetase]-O(4)-(5'-adenylyl)-L-tyrosine + phosphate = [glutamine synthetase]-L-tyrosine + ADP. It catalyses the reaction [glutamine synthetase]-L-tyrosine + ATP = [glutamine synthetase]-O(4)-(5'-adenylyl)-L-tyrosine + diphosphate. Functionally, involved in the regulation of glutamine synthetase GlnA, a key enzyme in the process to assimilate ammonia. When cellular nitrogen levels are high, the C-terminal adenylyl transferase (AT) inactivates GlnA by covalent transfer of an adenylyl group from ATP to specific tyrosine residue of GlnA, thus reducing its activity. Conversely, when nitrogen levels are low, the N-terminal adenylyl removase (AR) activates GlnA by removing the adenylyl group by phosphorolysis, increasing its activity. The regulatory region of GlnE binds the signal transduction protein PII (GlnB) which indicates the nitrogen status of the cell. This is Bifunctional glutamine synthetase adenylyltransferase/adenylyl-removing enzyme from Thioalkalivibrio sulfidiphilus (strain HL-EbGR7).